The following is a 205-amino-acid chain: Bacterial microcompartment protein trimer-1 (205 aa).

A disordered region spans residues 1–20 (MDHAPERFDATPPAGEPDRP). BMC domains lie at 21 to 106 (ALGV…RFLD) and 120 to 204 (SVII…GRLF).

It belongs to the bacterial microcompartments protein family. As to quaternary structure, homotrimerizes to form a pseudohexamer. Unlike its paralogs BMC-T2 and BMC-T3, the pseudohexamers do not stack. The concave side faces outward, with the N- and C-terminii exposed to the cytoplasm.

Its subcellular location is the bacterial microcompartment. A minor component of the bacterial microcompartment (BMC) shell. Expression of 5 proteins in E.coli (BMC-H (Hoch_5815), BMC-P (Hoch_5814), and 3 BMC-T (Hoch_5812, Hoch_5816, Hoch_3341)) forms 40 nm artificial BMCs with a molecular mass of 6.5 MDa. This protein does not form stacked pseudohexamers in the BMC. There are 20 BMC-T pseudohexamers per BMC, composed of mixed BMC-T1, BMC-T2 and BMC-T3. The shell facets are 20-30 Angstroms thick, with 1 of BMC-T trimers protruding to the exterior. In Haliangium ochraceum (strain DSM 14365 / JCM 11303 / SMP-2), this protein is Bacterial microcompartment protein trimer-1.